We begin with the raw amino-acid sequence, 262 residues long: Acyl-[acyl-carrier-protein]--UDP-N-acetylglucosamine O-acyltransferase (262 aa).

This sequence belongs to the transferase hexapeptide repeat family. LpxA subfamily. Homotrimer.

Its subcellular location is the cytoplasm. The enzyme catalyses a (3R)-hydroxyacyl-[ACP] + UDP-N-acetyl-alpha-D-glucosamine = a UDP-3-O-[(3R)-3-hydroxyacyl]-N-acetyl-alpha-D-glucosamine + holo-[ACP]. The protein operates within glycolipid biosynthesis; lipid IV(A) biosynthesis; lipid IV(A) from (3R)-3-hydroxytetradecanoyl-[acyl-carrier-protein] and UDP-N-acetyl-alpha-D-glucosamine: step 1/6. Its function is as follows. Involved in the biosynthesis of lipid A, a phosphorylated glycolipid that anchors the lipopolysaccharide to the outer membrane of the cell. The sequence is that of Acyl-[acyl-carrier-protein]--UDP-N-acetylglucosamine O-acyltransferase from Sodalis glossinidius (strain morsitans).